The following is a 231-amino-acid chain: Ribonuclease HII (231 aa).

In terms of domain architecture, RNase H type-2 spans 38-227 (ELVAGGDEAG…IKSFYGQLKL (190 aa)). Asp-44, Glu-45, and Asp-136 together coordinate a divalent metal cation.

It belongs to the RNase HII family. It depends on Mn(2+) as a cofactor. Mg(2+) is required as a cofactor.

The protein resides in the cytoplasm. It carries out the reaction Endonucleolytic cleavage to 5'-phosphomonoester.. Its function is as follows. Endonuclease that specifically degrades the RNA of RNA-DNA hybrids. This Carboxydothermus hydrogenoformans (strain ATCC BAA-161 / DSM 6008 / Z-2901) protein is Ribonuclease HII.